Reading from the N-terminus, the 365-residue chain is Histidinol-phosphate aminotransferase 2 (365 aa).

At Lys-222 the chain carries N6-(pyridoxal phosphate)lysine.

Belongs to the class-II pyridoxal-phosphate-dependent aminotransferase family. Histidinol-phosphate aminotransferase subfamily. In terms of assembly, homodimer. It depends on pyridoxal 5'-phosphate as a cofactor.

It catalyses the reaction L-histidinol phosphate + 2-oxoglutarate = 3-(imidazol-4-yl)-2-oxopropyl phosphate + L-glutamate. It participates in amino-acid biosynthesis; L-histidine biosynthesis; L-histidine from 5-phospho-alpha-D-ribose 1-diphosphate: step 7/9. In Bordetella bronchiseptica (strain ATCC BAA-588 / NCTC 13252 / RB50) (Alcaligenes bronchisepticus), this protein is Histidinol-phosphate aminotransferase 2 (hisC2).